We begin with the raw amino-acid sequence, 430 residues long: Pyrokinin-1 receptor (430 aa).

Residues 1-16 (MSAGNMSHDLGPPRDP) lie on the Extracellular side of the membrane. A glycan (N-linked (GlcNAc...) asparagine) is linked at Asn5. Residues 17 to 37 (LAIVIPVTVVYSLIFITGVVG) traverse the membrane as a helical segment. Topologically, residues 38–53 (NISTCIVIKKNRSMHT) are cytoplasmic. The helical transmembrane segment at 54-74 (ATNYYLFSLAISDFLLLLSGV) threads the bilayer. The Extracellular portion of the chain corresponds to 75 to 96 (PQEVSYIWSKYPYVFGEYICIG). A disulfide bridge connects residues Cys94 and Cys171. Residues 97 to 117 (RGLLAETSANATVLTITAFTV) form a helical membrane-spanning segment. Over 118-140 (ERYIAICHPFLGQAMSKLSRAIR) the chain is Cytoplasmic. Residues 141 to 161 (IIVLVWIMAIVTAIPQAAQFG) form a helical membrane-spanning segment. At 162 to 185 (IEHYSGVEQCGIVRVIVKHSFQLS) the chain is on the extracellular side. The chain crosses the membrane as a helical span at residues 186–206 (TFIFFLAPMSIILVLYLLIGV). The Cytoplasmic segment spans residues 207–281 (HLYRSTLVEG…GRLNHYGTRR (75 aa)). Residues 282–302 (VLRMLVAVVVCFFLCWAPFHA) traverse the membrane as a helical segment. Topologically, residues 303 to 321 (QRLIAIYAPARGAKLRDQH) are extracellular. A helical membrane pass occupies residues 322 to 342 (EFVYTVMTYVSGVLYYLSTCI). Topologically, residues 343-430 (NPLLYNIMSH…QYAMIGVQVN (88 aa)) are cytoplasmic. The span at 388 to 397 (TNSSQTQRFS) shows a compositional bias: polar residues. The disordered stretch occupies residues 388–413 (TNSSQTQRFSIESAEQPKPSIMQNPT).

The protein belongs to the G-protein coupled receptor 1 family.

The protein resides in the cell membrane. In terms of biological role, receptor for the neuropeptide CAP-3/pyrokinin-1 (TGPSASSGLWFGPRL-amide). Also activated weakly by other neuropeptides terminating in the sequence PRL-amide including pyrokinin-2, Hug-gamma, and ecdysis-triggering-hormone-1. The activity of this receptor is mediated by G proteins which activate a phosphatidyl-inositol-calcium second messenger system. This Drosophila melanogaster (Fruit fly) protein is Pyrokinin-1 receptor.